The sequence spans 230 residues: UPF0173 metal-dependent hydrolase RHOS4_08540 (230 aa).

This sequence belongs to the UPF0173 family.

In Cereibacter sphaeroides (strain ATCC 17023 / DSM 158 / JCM 6121 / CCUG 31486 / LMG 2827 / NBRC 12203 / NCIMB 8253 / ATH 2.4.1.) (Rhodobacter sphaeroides), this protein is UPF0173 metal-dependent hydrolase RHOS4_08540.